We begin with the raw amino-acid sequence, 219 residues long: Glycerol-3-phosphate acyltransferase 2 (219 aa).

5 consecutive transmembrane segments (helical) span residues 1–21 (MVFW…GSTP), 55–75 (WPAL…VVFA), 93–113 (ALDL…AVLL), 135–155 (VLLA…GVAL), and 160–180 (IVSL…CGLE).

The protein belongs to the PlsY family. Probably interacts with PlsX.

Its subcellular location is the cell inner membrane. The enzyme catalyses an acyl phosphate + sn-glycerol 3-phosphate = a 1-acyl-sn-glycero-3-phosphate + phosphate. Its pathway is lipid metabolism; phospholipid metabolism. Functionally, catalyzes the transfer of an acyl group from acyl-phosphate (acyl-PO(4)) to glycerol-3-phosphate (G3P) to form lysophosphatidic acid (LPA). This enzyme utilizes acyl-phosphate as fatty acyl donor, but not acyl-CoA or acyl-ACP. The protein is Glycerol-3-phosphate acyltransferase 2 of Rhizobium johnstonii (strain DSM 114642 / LMG 32736 / 3841) (Rhizobium leguminosarum bv. viciae).